The following is a 373-amino-acid chain: Putative F-box/kelch-repeat protein At5g24040 (373 aa).

Residues 2 to 50 (VKWSELPPEILHLISLKIDNPFDLIHFRSVCSFWRSSSLLKFRHMTSLR) form the F-box domain. Kelch repeat units lie at residues 165-207 (NEYM…PFKG) and 262-308 (YDFH…CTFS).

This is Putative F-box/kelch-repeat protein At5g24040 from Arabidopsis thaliana (Mouse-ear cress).